A 137-amino-acid chain; its full sequence is Small heat shock protein IbpA (137 aa).

Residues 28-137 (SQSNGGYPPY…AKKPRRIEIN (110 aa)) form the sHSP domain.

It belongs to the small heat shock protein (HSP20) family. As to quaternary structure, monomer. Forms homomultimers of about 100-150 subunits at optimal growth temperatures. Conformation changes to monomers at high temperatures or high ionic concentrations.

It is found in the cytoplasm. In terms of biological role, associates with aggregated proteins, together with IbpB, to stabilize and protect them from irreversible denaturation and extensive proteolysis during heat shock and oxidative stress. Aggregated proteins bound to the IbpAB complex are more efficiently refolded and reactivated by the ATP-dependent chaperone systems ClpB and DnaK/DnaJ/GrpE. Its activity is ATP-independent. This Shigella sonnei (strain Ss046) protein is Small heat shock protein IbpA.